The chain runs to 594 residues: MSKSRRVFLSMQDDDDFWGNGDRFEEEKSCLAAKAKQRSCPVVEMEEDDEEMEEKYFFKQSHLVRQRLEQMKEREKVDEEKEGVERREENGFSGKPWKFRVDSDEHEMKSDDVVTEDRSIMGTKTFNSDFDDKSAIKSSLSMSLESNDVFYANYRNFFRGRPEVHFLIRCLFEKNPETFDNQFIDLYEKTRKRLEMYPNPHINQILRRTLSSSNATETRVRSKHAVVVSNFREPDRRLGRYSKYYYHHNVGPEVYSRKVFVGGLPACVTEDDILGFFSRYGRLQVDWPSKHYGGSKSDSDPSLCSEIITPPAPLSHLSMASPPFGQINPFMSGYVAPAETRGGFLRASGFSEGGGFGGGFGGGIGGGGGFNSGSGSGNGTKSDGSTSEKRQSHLGYVFLLFEKERSVRDLVAECFEEEEGLFITLESSLEPIRVQIRPWLLADAEFLMDFNVPINTKLVAFIGGVPRPLKAVELAHFFEQTYGNVVCVGIDIDNKFKYPRGSGRVAFSNYDAYVQAITDRYIVLDHEDIHKRVEIKPYFFHNQSCEECSGRYHRQHAPFFCPSLECFQYYCEPCWHKMHAHPSRFHHMPVVKGV.

The segment covering 72–90 (KEREKVDEEKEGVERREEN) has biased composition (basic and acidic residues). Disordered regions lie at residues 72–91 (KERE…EENG) and 367–388 (GGGF…STSE). Residues 367 to 378 (GGGFNSGSGSGN) show a composition bias toward gly residues. In terms of domain architecture, RRM spans 458-540 (LVAFIGGVPR…KRVEIKPYFF (83 aa)).

Its function is as follows. Cytoplasmic polyadenylation element binding protein that binds to and regulates the translation of specific mRNAs. The sequence is that of Cytoplasmic polyadenylation element-binding protein 2 (cpb-2) from Caenorhabditis japonica.